We begin with the raw amino-acid sequence, 356 residues long: Viral cathepsin (356 aa).

An N-terminal signal peptide occupies residues 1 to 40 (MYANALVCLNPSFIKLQFHIVCTMNIIGIVTLALCSAASA). Positions 41-144 (ADEGAAYNLQ…IILNQPPDKG (104 aa)) are cleaved as a propeptide — activation peptide. Intrachain disulfides connect C165/C206, C199/C239, and C295/C343. The active site involves C168. Residues H302 and N322 contribute to the active site.

The protein belongs to the peptidase C1 family. In terms of processing, synthesized as an inactive proenzyme and activated by proteolytic removal of the inhibitory propeptide.

The enzyme catalyses Endopeptidase of broad specificity, hydrolyzing substrates of both cathepsin L and cathepsin B.. Cysteine protease that plays an essential role in host liquefaction to facilitate horizontal transmission of the virus. May participate in the degradation of foreign protein expressed by the baculovirus system. The polypeptide is Viral cathepsin (VCATH) (Lepidoptera (butterflies and moths)).